Consider the following 276-residue polypeptide: Expansin-like A3 (276 aa).

The signal sequence occupies residues 1 to 28 (MAVLLSILSSSFLLLLAASSSSTPRASA). An Expansin-like EG45 domain is found at 52–158 (GGGCGYGAMA…RRIPCDYKDK (107 aa)). 2 N-linked (GlcNAc...) asparagine glycosylation sites follow: Asn115 and Asn159. The region spanning 172-255 (NNLVIKFLYQ…NWQPGQVYDT (84 aa)) is the Expansin-like CBD domain.

It belongs to the expansin family. Expansin-like A subfamily.

The protein resides in the secreted. The sequence is that of Expansin-like A3 (EXLA3) from Oryza sativa subsp. japonica (Rice).